An 885-amino-acid chain; its full sequence is Pyruvate, phosphate dikinase (885 aa).

An N-terminal region spans residues 1–342 (MQRVYAFEDG…LYMLQTRNGK (342 aa)). Arg-91 contributes to the ATP binding site. The interval 343-399 (MNATATVRTGVDMVEEGLITKEQAIMRIAPQSVDQLLHKNMPANYAEAPLVKGLPAS) is linker 1. A central region spans residues 400–497 (PGAATGAVVF…EVHEGDILTI (98 aa)). His-454 functions as the Tele-phosphohistidine intermediate in the catalytic mechanism. The segment at 498–533 (DGSTGCVYKGEVPLEEPQVGSGYFGTILKWANEIKK) is linker 2. Residues 534-885 (IGVFANADLP…QAQIRHPREN (352 aa)) are C-terminal. Substrate-binding residues include Arg-561, Arg-617, Glu-752, Gly-773, Thr-774, Asn-775, and Asp-776. Glu-752 contributes to the Mg(2+) binding site. Asp-776 provides a ligand contact to Mg(2+). Catalysis depends on Cys-839, which acts as the Proton donor.

The protein belongs to the PEP-utilizing enzyme family. As to quaternary structure, homodimer. It depends on Mg(2+) as a cofactor.

It catalyses the reaction pyruvate + phosphate + ATP = phosphoenolpyruvate + AMP + diphosphate + H(+). In terms of biological role, catalyzes the dephosphorylation of phosphoenolpyruvate and diphosphate to produce ATP. This is Pyruvate, phosphate dikinase from Entamoeba histolytica (strain ATCC 30459 / HM-1:IMSS / ABRM).